The primary structure comprises 462 residues: Chromosomal replication initiator protein DnaA (462 aa).

Residues 1-84 (MAVSLWQQCI…RFDIGSRPSA (84 aa)) are domain I, interacts with DnaA modulators. Residues 84-125 (ARTVQPAPAAPRPTTGHTQTKARVGTAFNIQAEPMANANHRS) form a domain II region. The tract at residues 126-342 (NINPTYQFDN…GALNRVIANA (217 aa)) is domain III, AAA+ region. The ATP site is built by glycine 170, glycine 172, lysine 173, and threonine 174. The interval 343–462 (NFTGRPITID…YANLIRTLSS (120 aa)) is domain IV, binds dsDNA.

This sequence belongs to the DnaA family. Oligomerizes as a right-handed, spiral filament on DNA at oriC.

It is found in the cytoplasm. Its function is as follows. Plays an essential role in the initiation and regulation of chromosomal replication. ATP-DnaA binds to the origin of replication (oriC) to initiate formation of the DNA replication initiation complex once per cell cycle. Binds the DnaA box (a 9 base pair repeat at the origin) and separates the double-stranded (ds)DNA. Forms a right-handed helical filament on oriC DNA; dsDNA binds to the exterior of the filament while single-stranded (ss)DNA is stabiized in the filament's interior. The ATP-DnaA-oriC complex binds and stabilizes one strand of the AT-rich DNA unwinding element (DUE), permitting loading of DNA polymerase. After initiation quickly degrades to an ADP-DnaA complex that is not apt for DNA replication. Binds acidic phospholipids. The chain is Chromosomal replication initiator protein DnaA from Shewanella denitrificans (strain OS217 / ATCC BAA-1090 / DSM 15013).